The sequence spans 550 residues: Cell pattern formation-associated protein STUA (550 aa).

The HTH APSES-type domain occupies 86–192 (RVTATLWEDE…HNIGALLYHP (107 aa)). Residues 120–141 (GTKLLNVAGMTRGRRDGILKSE) constitute a DNA-binding region (H-T-H motif). The segment covering 246–266 (SLANGPQSLASTPQPLTNGSQ) has biased composition (polar residues). Disordered stretches follow at residues 246–277 (SLAN…GMLK), 371–412 (HHQP…VKRR), 447–467 (KRRD…DHLN), and 527–550 (APVY…QSFG). Residues 385–395 (RGRDEDDDVHR) are compositionally biased toward basic and acidic residues. Positions 517–546 (TVAASPSYPSAPVYDTGARPPSAISAPRRQ) are nuclear localization domain.

This sequence belongs to the EFG1/PHD1/stuA family.

Its subcellular location is the nucleus. Transcription factor that regulates asexual reproduction. Binds the StuA-response elements (StRE) with the consensus sequence 5'-(A/T)CGCG(T/A)N(A/C)-3' at the promoters of target genes. Differentially regulates the development of macroconidia, microconidia, and chlamydospores. Acts as a positive regulator for the development of macroconidia and as a negative regulator for the development of chlamydospores. Involved in microconidium formation specifically in infected plants. The sequence is that of Cell pattern formation-associated protein STUA from Fusarium oxysporum (Fusarium vascular wilt).